The following is a 415-amino-acid chain: Serine/threonine transporter SstT (415 aa).

The next 8 membrane-spanning stretches (helical) occupy residues 23-43 (ILVGLVLGILLAWLSKPAAIA), 47-67 (LGTLFVGALKAVAPVLVLMLV), 85-105 (ILWLYLLGTFSAALTAVLFSF), 144-164 (ALLKGNYIGILVWAVGLGFAL), 181-201 (AVTFMVKLVIRFAPIGIFGLV), 220-240 (LMVLIGCMFLVALVINPLIVF), 303-323 (GAAITITVLTLAAVHTLGIAV), and 333-353 (VVASLCACGASGVAGGSLLLI).

This sequence belongs to the dicarboxylate/amino acid:cation symporter (DAACS) (TC 2.A.23) family.

The protein resides in the cell inner membrane. It catalyses the reaction L-serine(in) + Na(+)(in) = L-serine(out) + Na(+)(out). The enzyme catalyses L-threonine(in) + Na(+)(in) = L-threonine(out) + Na(+)(out). In terms of biological role, involved in the import of serine and threonine into the cell, with the concomitant import of sodium (symport system). In Cronobacter sakazakii (strain ATCC BAA-894) (Enterobacter sakazakii), this protein is Serine/threonine transporter SstT.